Consider the following 669-residue polypeptide: DNA ligase (669 aa).

Residues 33–37 (DVTYD), 82–83 (SL), and Glu115 contribute to the NAD(+) site. Lys117 functions as the N6-AMP-lysine intermediate in the catalytic mechanism. Positions 138, 172, 286, and 310 each coordinate NAD(+). 4 residues coordinate Zn(2+): Cys401, Cys404, Cys417, and Cys422. The BRCT domain occupies 589-669 (VDSSFLFGKK…DIKNLVNLDD (81 aa)).

This sequence belongs to the NAD-dependent DNA ligase family. LigA subfamily. Mg(2+) serves as cofactor. The cofactor is Mn(2+).

The enzyme catalyses NAD(+) + (deoxyribonucleotide)n-3'-hydroxyl + 5'-phospho-(deoxyribonucleotide)m = (deoxyribonucleotide)n+m + AMP + beta-nicotinamide D-nucleotide.. Its function is as follows. DNA ligase that catalyzes the formation of phosphodiester linkages between 5'-phosphoryl and 3'-hydroxyl groups in double-stranded DNA using NAD as a coenzyme and as the energy source for the reaction. It is essential for DNA replication and repair of damaged DNA. This is DNA ligase from Borrelia duttonii (strain Ly).